Reading from the N-terminus, the 94-residue chain is Co-chaperonin GroES (94 aa).

The protein belongs to the GroES chaperonin family. Heptamer of 7 subunits arranged in a ring. Interacts with the chaperonin GroEL.

The protein resides in the cytoplasm. Together with the chaperonin GroEL, plays an essential role in assisting protein folding. The GroEL-GroES system forms a nano-cage that allows encapsulation of the non-native substrate proteins and provides a physical environment optimized to promote and accelerate protein folding. GroES binds to the apical surface of the GroEL ring, thereby capping the opening of the GroEL channel. The sequence is that of Co-chaperonin GroES from Clostridium perfringens (strain SM101 / Type A).